The following is a 152-amino-acid chain: Serglycin (152 aa).

Positions 1–25 (MQVPVGSRLVLALAFVLVWGSSVQG) are cleaved as a signal peptide. The propeptide at 26 to 74 (YPARRARYQWVRCKPNGFFANCIEEKGPQFDLIDESNNIGPPMNNPVLM) is activation peptide. A disulfide bond links C38 and C47. A disordered region spans residues 66–115 (PPMNNPVLMEGPSKDFISNYDDYGSGSGSGSGSGSGSGSGSGSGFLGDME). 10 consecutive repeat copies span residues 89–90 (GS), 91–92 (GS), 93–94 (GS), 95–96 (GS), 97–98 (GS), 99–100 (GS), 101–102 (GS), 103–104 (GS), 105–106 (GS), and 107–108 (GS). A 10 X 2 AA tandem repeats of G-S region spans residues 89-108 (GSGSGSGSGSGSGSGSGSGS). Gly residues predominate over residues 90 to 110 (SGSGSGSGSGSGSGSGSGSGF). Residues S92 and S94 are each glycosylated (O-linked (Xyl...) (glycosaminoglycan) serine). S98, S100, S102, S104, S106, and S108 each carry an O-linked (Xyl...) (glycosaminoglycan) serine glycan.

It belongs to the serglycin family. In terms of assembly, binds to activated CD44 and to GZMB. Post-translationally, O-glycosylated; contains chondroitin sulfate and heparan sulfate.

It is found in the cytoplasmic granule. The protein resides in the cytolytic granule. The protein localises to the secreted. Its subcellular location is the extracellular space. It localises to the golgi apparatus. Plays a role in formation of mast cell secretory granules and mediates storage of various compounds in secretory vesicles. Required for storage of some proteases in both connective tissue and mucosal mast cells and for storage of granzyme B in T-lymphocytes. Plays a role in localizing neutrophil elastase in azurophil granules of neutrophils. Mediates processing of MMP2. Plays a role in cytotoxic cell granule-mediated apoptosis by forming a complex with granzyme B which is delivered to cells by perforin to induce apoptosis. Regulates the secretion of TNF-alpha and may also regulate protease secretion. Inhibits bone mineralization. This Mus musculus (Mouse) protein is Serglycin (Srgn).